Reading from the N-terminus, the 72-residue chain is Sec-independent protein translocase protein TatA (72 aa).

The helical transmembrane segment at 1-21 threads the bilayer; sequence MPFGLGLPEILVIGVIALLIF. The tract at residues 41–72 is disordered; sequence KSGVSDEPAPQQSASKETAPNPPQSLPSGKDS.

Belongs to the TatA/E family. As to quaternary structure, forms a complex with TatC.

Its subcellular location is the cell inner membrane. Part of the twin-arginine translocation (Tat) system that transports large folded proteins containing a characteristic twin-arginine motif in their signal peptide across membranes. TatA could form the protein-conducting channel of the Tat system. This is Sec-independent protein translocase protein TatA from Gloeobacter violaceus (strain ATCC 29082 / PCC 7421).